Consider the following 958-residue polypeptide: Collagen alpha-1(I) chain (958 aa).

The tract at residues 1-958 (GPMGPSGPRG…PGPPGPPGPP (958 aa)) is disordered. The span at 50–64 (NGDDGEAGKPGRPGE) shows a compositional bias: basic and acidic residues. The residue at position 92 (serine 92) is a Phosphoserine. Composition is skewed to low complexity over residues 100–116 (DAGP…PGEN) and 139–152 (PAGA…TGAA). Positions 154–166 (PPGPTGPAGPPGF) are enriched in pro residues. Low complexity predominate over residues 216-232 (APGIAGAPGFPGARGPS). A compositionally biased stretch (gly residues) spans 294–303 (GERGGPGSRG). Low complexity-rich tracts occupy residues 304–335 (FPGS…PGEA), 347–373 (KGIT…QDGR), 382–401 (ARGQ…AGEP), 557–571 (SGPS…ARGA), 584–614 (AGFA…AGPA), 640–656 (SAGP…AGRV), 685–694 (ETGPAGRPGE), and 704–728 (AGEK…QGIA). The residue at position 560 (serine 560) is a Phosphoserine. Pro residues-rich tracts occupy residues 769 to 779 (PPGPVGPPGIA) and 808 to 823 (AGPP…PGPV). The span at 859–873 (RGDKGETGEQGDRGI) shows a compositional bias: basic and acidic residues. The span at 892–925 (PGEQGPSGASGPAGPRGPPGSAGAPGKDGINGIP) shows a compositional bias: low complexity. Over residues 943–958 (VGPPGPPGPPGPPGPP) the composition is skewed to pro residues.

It belongs to the fibrillar collagen family. As to quaternary structure, trimers of one alpha 2(I) and two alpha 1(I) chains. Post-translationally, prolines at the third position of the tripeptide repeating unit (G-X-Y) are hydroxylated in some or all of the chains. As to expression, forms the fibrils of tendon, ligaments and bones. In bones, the fibrils are mineralized with calcium hydroxyapatite.

It localises to the secreted. Its subcellular location is the extracellular space. The protein localises to the extracellular matrix. Its function is as follows. Type I collagen is a member of group I collagen (fibrillar forming collagen). The protein is Collagen alpha-1(I) chain of Macrauchenia sp.